The chain runs to 339 residues: Intelectin-1 (339 aa).

Residues Met-1–Ala-18 form the signal peptide. A Fibrinogen C-terminal domain is found at Gly-58–Val-108. Residues Cys-67 and Cys-96 are joined by a disulfide bond. The Ca(2+) site is built by His-112, Glu-113, Asn-115, Gly-118, Gly-123, Asp-124, and Asp-159. 3 disulfides stabilise this stretch: Cys-120–Cys-306, Cys-225–Cys-285, and Cys-277–Cys-291. Asn-189 is a glycosylation site (N-linked (GlcNAc...) asparagine). Residues Asn-286, Glu-288, Glu-300, and Asp-308 each contribute to the Ca(2+) site. A carbohydrate-binding positions include Glu-288–His-289 and Glu-300.

In terms of assembly, homotrimer; disulfide-linked. Homohexamer; disulfide-linked. Forms primarily homotrimers in solution, but can also form homohexamers. Post-translationally, N-glycosylated.

It is found in the secreted. The protein resides in the cytoplasmic vesicle. Its subcellular location is the secretory vesicle. Lectin that specifically recognizes microbial carbohydrate chains in a calcium-dependent manner. Binds to microbial glycans that contain a terminal acyclic 1,2-diol moiety, including beta-linked D-galactofuranose (beta-Galf) and D-phosphoglycerol-modified glycans. Binds to S.pneumoniae serotypes with glycans that contain beta-linked D-galactofuranose (beta-Galf) and with D-phosphoglycerol-modified glycans. Can bind a variety of monosaccharides (in vitro). Probably plays a role in the defense system against microorganisms. The sequence is that of Intelectin-1 (itln1) from Xenopus laevis (African clawed frog).